Reading from the N-terminus, the 667-residue chain is tRNA 5-methylaminomethyl-2-thiouridine biosynthesis bifunctional protein MnmC (667 aa).

The span at 1–12 (MSKQQAPNTTGI) shows a compositional bias: polar residues. Residues 1-20 (MSKQQAPNTTGIGTADLQWH) are disordered. Residues 1 to 240 (MSKQQAPNTT…KRECLRGVLE (240 aa)) are tRNA (mnm(5)s(2)U34)-methyltransferase. An FAD-dependent cmnm(5)s(2)U34 oxidoreductase region spans residues 268 to 667 (IGAGIAGAAC…LVRSLKKPPL (400 aa)).

It in the N-terminal section; belongs to the methyltransferase superfamily. tRNA (mnm(5)s(2)U34)-methyltransferase family. This sequence in the C-terminal section; belongs to the DAO family. The cofactor is FAD.

The protein localises to the cytoplasm. The catalysed reaction is 5-aminomethyl-2-thiouridine(34) in tRNA + S-adenosyl-L-methionine = 5-methylaminomethyl-2-thiouridine(34) in tRNA + S-adenosyl-L-homocysteine + H(+). Its function is as follows. Catalyzes the last two steps in the biosynthesis of 5-methylaminomethyl-2-thiouridine (mnm(5)s(2)U) at the wobble position (U34) in tRNA. Catalyzes the FAD-dependent demodification of cmnm(5)s(2)U34 to nm(5)s(2)U34, followed by the transfer of a methyl group from S-adenosyl-L-methionine to nm(5)s(2)U34, to form mnm(5)s(2)U34. The chain is tRNA 5-methylaminomethyl-2-thiouridine biosynthesis bifunctional protein MnmC from Magnetococcus marinus (strain ATCC BAA-1437 / JCM 17883 / MC-1).